The chain runs to 249 residues: Large ribosomal subunit protein uL16m (249 aa).

This sequence belongs to the universal ribosomal protein uL16 family. In terms of assembly, component of the mitochondrial large ribosomal subunit (mt-LSU). Mature N.crassa 74S mitochondrial ribosomes consist of a small (37S) and a large (54S) subunit. The 37S small subunit contains a 16S ribosomal RNA (16S mt-rRNA) and 32 different proteins. The 54S large subunit contains a 23S rRNA (23S mt-rRNA) and 42 different proteins.

The protein localises to the mitochondrion. In terms of biological role, component of the mitochondrial ribosome (mitoribosome), a dedicated translation machinery responsible for the synthesis of mitochondrial genome-encoded proteins, including at least some of the essential transmembrane subunits of the mitochondrial respiratory chain. The mitoribosomes are attached to the mitochondrial inner membrane and translation products are cotranslationally integrated into the membrane. This is Large ribosomal subunit protein uL16m (mrpl16) from Neurospora crassa (strain ATCC 24698 / 74-OR23-1A / CBS 708.71 / DSM 1257 / FGSC 987).